Here is an 87-residue protein sequence, read N- to C-terminus: Protein anon-73B1 (87 aa).

The helical transmembrane segment at 25-47 threads the bilayer; the sequence is LLIRYGLYVGALFQFVCISAAVL. Residues 51-87 form a disordered region; it reads NPDGQSNPESGEVTEREGEPVRTRLHKIRKLEKKKRR. The segment covering 63–72 has biased composition (basic and acidic residues); the sequence is VTEREGEPVR. Residues 73–87 are compositionally biased toward basic residues; the sequence is TRLHKIRKLEKKKRR.

The protein belongs to the UPF0239 family.

Its subcellular location is the membrane. The protein is Protein anon-73B1 (anon-73B1) of Drosophila melanogaster (Fruit fly).